Reading from the N-terminus, the 288-residue chain is Phosphatidylserine decarboxylase proenzyme (288 aa).

Catalysis depends on charge relay system; for autoendoproteolytic cleavage activity residues Asp-91, His-148, and Ser-254. Ser-254 acts as the Schiff-base intermediate with substrate; via pyruvic acid; for decarboxylase activity in catalysis. At Ser-254 the chain carries Pyruvic acid (Ser); by autocatalysis.

This sequence belongs to the phosphatidylserine decarboxylase family. PSD-B subfamily. Prokaryotic type I sub-subfamily. Heterodimer of a large membrane-associated beta subunit and a small pyruvoyl-containing alpha subunit. Pyruvate serves as cofactor. Is synthesized initially as an inactive proenzyme. Formation of the active enzyme involves a self-maturation process in which the active site pyruvoyl group is generated from an internal serine residue via an autocatalytic post-translational modification. Two non-identical subunits are generated from the proenzyme in this reaction, and the pyruvate is formed at the N-terminus of the alpha chain, which is derived from the carboxyl end of the proenzyme. The autoendoproteolytic cleavage occurs by a canonical serine protease mechanism, in which the side chain hydroxyl group of the serine supplies its oxygen atom to form the C-terminus of the beta chain, while the remainder of the serine residue undergoes an oxidative deamination to produce ammonia and the pyruvoyl prosthetic group on the alpha chain. During this reaction, the Ser that is part of the protease active site of the proenzyme becomes the pyruvoyl prosthetic group, which constitutes an essential element of the active site of the mature decarboxylase.

It localises to the cell membrane. The enzyme catalyses a 1,2-diacyl-sn-glycero-3-phospho-L-serine + H(+) = a 1,2-diacyl-sn-glycero-3-phosphoethanolamine + CO2. Its pathway is phospholipid metabolism; phosphatidylethanolamine biosynthesis; phosphatidylethanolamine from CDP-diacylglycerol: step 2/2. Functionally, catalyzes the formation of phosphatidylethanolamine (PtdEtn) from phosphatidylserine (PtdSer). This Pseudoalteromonas translucida (strain TAC 125) protein is Phosphatidylserine decarboxylase proenzyme.